Here is a 376-residue protein sequence, read N- to C-terminus: GDSL esterase/lipase 2 (376 aa).

The first 25 residues, 1-25 (MENSRSTLIIFFAYTTIILIGSINC), serve as a signal peptide directing secretion. An N-linked (GlcNAc...) asparagine glycan is attached at N36. S46 serves as the catalytic Nucleophile. N-linked (GlcNAc...) asparagine glycosylation is found at N186 and N205. Active-site residues include D340 and H343. Residue N362 is glycosylated (N-linked (GlcNAc...) asparagine).

This sequence belongs to the 'GDSL' lipolytic enzyme family. In terms of tissue distribution, expressed seedlings, roots and stems.

The protein localises to the secreted. Its function is as follows. Involved in the resistance to the necrotropic bacteria Erwinia carotovora, probably via negative regulation of auxin signaling. Possesses lipase and antimicrobial activities, inhibiting germination of fungal spores (e.g. Alternaria brassicicola). The protein is GDSL esterase/lipase 2 (GLIP2) of Arabidopsis thaliana (Mouse-ear cress).